The chain runs to 465 residues: Ribosomal oxygenase 2 (465 aa).

Residues 139-271 (QPQRFKDELW…NSWGDFLLDT (133 aa)) form the JmjC domain. Fe cation contacts are provided by His179, Asp181, and His240. The residue at position 309 (Ser309) is a Phosphoserine.

This sequence belongs to the ROX family. MINA53 subfamily. Fe(2+) serves as cofactor.

Its subcellular location is the nucleus. It localises to the nucleolus. It carries out the reaction L-histidyl-[ribosomal protein uL15] + 2-oxoglutarate + O2 = (3S)-3-hydroxy-L-histidyl-[ribosomal protein uL15] + succinate + CO2. The catalysed reaction is L-histidyl-[protein] + 2-oxoglutarate + O2 = (3S)-3-hydroxy-L-histidyl-[protein] + succinate + CO2. Oxygenase that can act as both a histone lysine demethylase and a ribosomal histidine hydroxylase. Is involved in the demethylation of trimethylated 'Lys-9' on histone H3 (H3K9me3), leading to an increase in ribosomal RNA expression. Also catalyzes the hydroxylation of 60S ribosomal protein L27a on 'His-39'. May play an important role in cell growth and survival. May be involved in ribosome biogenesis, most likely during the assembly process of pre-ribosomal particles. This Pongo abelii (Sumatran orangutan) protein is Ribosomal oxygenase 2 (RIOX2).